The chain runs to 533 residues: Glucose-6-phosphate isomerase (533 aa).

Glu-330 acts as the Proton donor in catalysis. Active-site residues include His-359 and Lys-461.

Belongs to the GPI family.

It is found in the cytoplasm. The enzyme catalyses alpha-D-glucose 6-phosphate = beta-D-fructose 6-phosphate. The protein operates within carbohydrate biosynthesis; gluconeogenesis. It participates in carbohydrate degradation; glycolysis; D-glyceraldehyde 3-phosphate and glycerone phosphate from D-glucose: step 2/4. Catalyzes the reversible isomerization of glucose-6-phosphate to fructose-6-phosphate. The chain is Glucose-6-phosphate isomerase from Prochlorococcus marinus (strain SARG / CCMP1375 / SS120).